A 300-amino-acid polypeptide reads, in one-letter code: Putative glycosyltransferase ORF300 (300 aa).

It belongs to the glycosyltransferase group 1 family. Glycosyltransferase 4 subfamily.

The protein is Putative glycosyltransferase ORF300 of Acidianus hospitalis (AFV-1).